Reading from the N-terminus, the 550-residue chain is Hydroxylamine reductase (550 aa).

[2Fe-2S] cluster is bound by residues C3, C6, C18, and C25. H249, E273, C317, C405, C433, C458, E492, and K494 together coordinate hybrid [4Fe-2O-2S] cluster. At C405 the chain carries Cysteine persulfide.

The protein belongs to the HCP family. Requires [2Fe-2S] cluster as cofactor. The cofactor is hybrid [4Fe-2O-2S] cluster.

The protein resides in the cytoplasm. It catalyses the reaction A + NH4(+) + H2O = hydroxylamine + AH2 + H(+). Its function is as follows. Catalyzes the reduction of hydroxylamine to form NH(3) and H(2)O. This is Hydroxylamine reductase from Pectobacterium atrosepticum (strain SCRI 1043 / ATCC BAA-672) (Erwinia carotovora subsp. atroseptica).